The chain runs to 447 residues: Argininosuccinate synthase (447 aa).

ATP-binding positions include 17–25 (AFSGGLDTS) and Ala43. Tyr99 contributes to the L-citrulline binding site. ATP contacts are provided by Gly129 and Thr131. L-aspartate-binding residues include Thr131, Asn135, and Asp136. Asn135 is a binding site for L-citrulline. Asp136 contributes to the ATP binding site. Residues Arg139 and Ser192 each contribute to the L-citrulline site. ATP is bound at residue Asp194. Thr201, Glu203, and Glu280 together coordinate L-citrulline.

Belongs to the argininosuccinate synthase family. Type 2 subfamily. As to quaternary structure, homotetramer.

It is found in the cytoplasm. It catalyses the reaction L-citrulline + L-aspartate + ATP = 2-(N(omega)-L-arginino)succinate + AMP + diphosphate + H(+). It participates in amino-acid biosynthesis; L-arginine biosynthesis; L-arginine from L-ornithine and carbamoyl phosphate: step 2/3. The chain is Argininosuccinate synthase from Shigella boydii serotype 18 (strain CDC 3083-94 / BS512).